A 195-amino-acid polypeptide reads, in one-letter code: Type II secretion system protein J (195 aa).

The propeptide at 1–7 is leader sequence; sequence MINRQQG. At Phe8 the chain carries N-methylphenylalanine. Residues 8-29 form a helical membrane-spanning segment; it reads FTLLEVMAALAIFSMLSVLAFM.

It belongs to the GSP J family. In terms of assembly, type II secretion is composed of four main components: the outer membrane complex, the inner membrane complex, the cytoplasmic secretion ATPase and the periplasm-spanning pseudopilus. Interacts with core component GspG. Cleaved by prepilin peptidase. Post-translationally, methylated by prepilin peptidase at the amino group of the N-terminal phenylalanine once the leader sequence is cleaved by prepilin peptidase.

The protein resides in the cell inner membrane. Functionally, component of the type II secretion system required for the energy-dependent secretion of extracellular factors such as proteases and toxins from the periplasm. Part of the pseudopilus tip complex that is critical for the recognition and binding of secretion substrates. The polypeptide is Type II secretion system protein J (gspJ) (Escherichia coli (strain K12)).